Reading from the N-terminus, the 376-residue chain is N-acetyldiaminopimelate deacetylase (376 aa).

Asp69 is a catalytic residue. Glu128 serves as the catalytic Proton acceptor.

Belongs to the peptidase M20A family. N-acetyldiaminopimelate deacetylase subfamily.

It catalyses the reaction N-acetyl-(2S,6S)-2,6-diaminopimelate + H2O = (2S,6S)-2,6-diaminopimelate + acetate. It participates in amino-acid biosynthesis; L-lysine biosynthesis via DAP pathway; LL-2,6-diaminopimelate from (S)-tetrahydrodipicolinate (acetylase route): step 3/3. Its function is as follows. Catalyzes the conversion of N-acetyl-diaminopimelate to diaminopimelate and acetate. The polypeptide is N-acetyldiaminopimelate deacetylase (Bacillus cereus (strain G9842)).